The primary structure comprises 227 residues: Lipoprotein-releasing system ATP-binding protein LolD (227 aa).

Positions 6–227 (LKCENINKFY…MQDGLLKEGA (222 aa)) constitute an ABC transporter domain. 42–49 (GSSGSGKS) contributes to the ATP binding site.

Belongs to the ABC transporter superfamily. Lipoprotein translocase (TC 3.A.1.125) family. As to quaternary structure, the complex is composed of two ATP-binding proteins (LolD) and two transmembrane proteins (LolC and LolE).

It is found in the cell inner membrane. Functionally, part of the ABC transporter complex LolCDE involved in the translocation of mature outer membrane-directed lipoproteins, from the inner membrane to the periplasmic chaperone, LolA. Responsible for the formation of the LolA-lipoprotein complex in an ATP-dependent manner. The chain is Lipoprotein-releasing system ATP-binding protein LolD from Haemophilus influenzae (strain 86-028NP).